Here is a 400-residue protein sequence, read N- to C-terminus: Acetate kinase (400 aa).

Asparagine 10 is a binding site for Mg(2+). Residue lysine 17 coordinates ATP. Arginine 91 is a substrate binding site. Residue aspartate 150 is the Proton donor/acceptor of the active site. Residues 210 to 214 (HLGNG), 285 to 287 (DCR), and 333 to 337 (GIGEN) each bind ATP. A Mg(2+)-binding site is contributed by glutamate 387.

The protein belongs to the acetokinase family. As to quaternary structure, homodimer. The cofactor is Mg(2+). Mn(2+) serves as cofactor.

The protein localises to the cytoplasm. It carries out the reaction acetate + ATP = acetyl phosphate + ADP. Its pathway is metabolic intermediate biosynthesis; acetyl-CoA biosynthesis; acetyl-CoA from acetate: step 1/2. Its function is as follows. Catalyzes the formation of acetyl phosphate from acetate and ATP. Can also catalyze the reverse reaction. This is Acetate kinase from Salmonella typhi.